Consider the following 237-residue polypeptide: Cuticlin-like protein 19 (237 aa).

The first 20 residues, 1 to 20 (MVEYNRIFCVLVIFSTTIKC), serve as a signal peptide directing secretion.

In terms of assembly, interacts with vps-51 and vps-52. Expression detected in motor neurons.

It is found in the golgi apparatus. Its subcellular location is the trans-Golgi network. In Caenorhabditis elegans, this protein is Cuticlin-like protein 19 (cutl-19).